The chain runs to 184 residues: Peptidyl-tRNA hydrolase (184 aa).

Tyr14 contacts tRNA. The active-site Proton acceptor is His19. 3 residues coordinate tRNA: Phe64, Asn66, and Asn112.

It belongs to the PTH family. Monomer.

It localises to the cytoplasm. The enzyme catalyses an N-acyl-L-alpha-aminoacyl-tRNA + H2O = an N-acyl-L-amino acid + a tRNA + H(+). In terms of biological role, hydrolyzes ribosome-free peptidyl-tRNAs (with 1 or more amino acids incorporated), which drop off the ribosome during protein synthesis, or as a result of ribosome stalling. Its function is as follows. Catalyzes the release of premature peptidyl moieties from peptidyl-tRNA molecules trapped in stalled 50S ribosomal subunits, and thus maintains levels of free tRNAs and 50S ribosomes. The polypeptide is Peptidyl-tRNA hydrolase (Thermoanaerobacter pseudethanolicus (strain ATCC 33223 / 39E) (Clostridium thermohydrosulfuricum)).